A 415-amino-acid polypeptide reads, in one-letter code: L-cysteine:1D-myo-inositol 2-amino-2-deoxy-alpha-D-glucopyranoside ligase (415 aa).

The interval 1–20 (MQSWSETAVPSVPGQGPPLR) is disordered. Zn(2+) is bound at residue C43. Residues 43 to 46 (CGIT), T58, and 81 to 83 (NVT) each bind L-cysteinyl-5'-AMP. A 'HIGH' region motif is present at residues 45–55 (ITPYDATHLGH). The short motif at 187–192 (ERGGDP) is the 'ERGGDP' region element. W227 serves as a coordination point for L-cysteinyl-5'-AMP. C231 lines the Zn(2+) pocket. Position 249 to 251 (249 to 251 (GSD)) interacts with L-cysteinyl-5'-AMP. Zn(2+) is bound at residue H256. An L-cysteinyl-5'-AMP-binding site is contributed by I283. A 'KMSKS' region motif is present at residues 289–293 (KMSKS).

The protein belongs to the class-I aminoacyl-tRNA synthetase family. MshC subfamily. Monomer. It depends on Zn(2+) as a cofactor.

It carries out the reaction 1D-myo-inositol 2-amino-2-deoxy-alpha-D-glucopyranoside + L-cysteine + ATP = 1D-myo-inositol 2-(L-cysteinylamino)-2-deoxy-alpha-D-glucopyranoside + AMP + diphosphate + H(+). Its function is as follows. Catalyzes the ATP-dependent condensation of GlcN-Ins and L-cysteine to form L-Cys-GlcN-Ins. The sequence is that of L-cysteine:1D-myo-inositol 2-amino-2-deoxy-alpha-D-glucopyranoside ligase from Rhodococcus jostii (strain RHA1).